Consider the following 89-residue polypeptide: Signal recognition particle 19 kDa protein (89 aa).

This sequence belongs to the SRP19 family. Part of the signal recognition particle protein translocation system, which is composed of SRP and FtsY. Archaeal SRP consists of a 7S RNA molecule of 300 nucleotides and two protein subunits: SRP54 and SRP19.

The protein resides in the cytoplasm. Its function is as follows. Involved in targeting and insertion of nascent membrane proteins into the cytoplasmic membrane. Binds directly to 7S RNA and mediates binding of the 54 kDa subunit of the SRP. The chain is Signal recognition particle 19 kDa protein from Methanobrevibacter smithii (strain ATCC 35061 / DSM 861 / OCM 144 / PS).